The primary structure comprises 625 residues: Chaperone protein HtpG (625 aa).

The interval 1–341 (MEKKQFQAES…SEDLSLNISR (341 aa)) is a; substrate-binding. Positions 342–551 (EMLQHDRQLK…DGEITLEMEK (210 aa)) are b. The interval 552–625 (VLQAMPDNQN…FSQNMCKVMV (74 aa)) is c.

The protein belongs to the heat shock protein 90 family. In terms of assembly, homodimer.

Its subcellular location is the cytoplasm. Its function is as follows. Molecular chaperone. Has ATPase activity. This chain is Chaperone protein HtpG, found in Shouchella clausii (strain KSM-K16) (Alkalihalobacillus clausii).